Here is a 522-residue protein sequence, read N- to C-terminus: MAAVVAATRWWQLLLVLSAAGMGASGAPQPPNILLLLMDDMGWGDLGVYGEPSRETPNLDRMAAEGLLFPNFYSANPLCSPSRAALLTGRLPIRNGFYTTNAHARNAYTPQEIVGGIPDSEQLLPELLKKAGYVSKIVGKWHLGHRPQFHPLKHGFDEWFGSPNCHFGPYDNKARPNIPVYRDWEMVGRYYEEFPINLKTGEANLTQIYLQEALDFIKRQARHHPFFLYWAVDATHAPVYASKPFLGTSQRGRYGDAVREIDDSIGKILELLQDLHVADNTFVFFTSDNGAALISAPEQGGSNGPFLCGKQTTFEGGMREPALAWWPGHVTAGQVSHQLGSIMDLFTTSLALAGLTPPSDRAIDGLNLLPTLLQGRLMDRPIFYYRGDTLMAATLGQHKAHFWTWTNSWENFRQGIDFCPGQNVSGVTTHNLEDHTKLPLIFHLGRDPGERFPLSFASAEYQEALSRITSVVQQHQEALVPAQPQLNVCNWAVMNWAPPGCEKLGKCLTPPESIPKKCLWSH.

An N-terminal signal peptide occupies residues M1 to G26. The tract at residues A27 to D379 is catalytic domain. 3 residues coordinate Ca(2+): D39, D40, and C79. C79 serves as the catalytic Nucleophile. C79 bears the 3-oxoalanine (Cys) mark. H142 is a catalytic residue. N204 carries N-linked (GlcNAc...) asparagine glycosylation. 2 residues coordinate Ca(2+): D288 and N289. C308 and C419 are oxidised to a cystine. N423 is a glycosylation site (N-linked (GlcNAc...) asparagine). 2 disulfides stabilise this stretch: C489–C518 and C501–C507.

The protein belongs to the sulfatase family. Homodimer. The cofactor is Ca(2+). Post-translationally, the conversion to 3-oxoalanine (also known as C-formylglycine, FGly), of a serine or cysteine residue in prokaryotes and of a cysteine residue in eukaryotes, is critical for catalytic activity.

It localises to the lysosome. The enzyme catalyses Hydrolysis of the 6-sulfate groups of the N-acetyl-D-galactosamine 6-sulfate units of chondroitin sulfate and of the D-galactose 6-sulfate units of keratan sulfate.. The protein is N-acetylgalactosamine-6-sulfatase (GALNS) of Homo sapiens (Human).